A 218-amino-acid polypeptide reads, in one-letter code: Riboflavin synthase (218 aa).

2 Lumazine-binding repeats span residues 1–97 (MFTG…LGGH) and 98–194 (LVSG…EKLI). Residues 4–6 (GII), 48–50 (CLT), 62–67 (DLSLET), 101–103 (GHV), K136, 145–147 (SLT), and 159–164 (TIVPHT) each bind 2,4-dihydroxypteridine.

In terms of assembly, homotrimer.

The catalysed reaction is 2 6,7-dimethyl-8-(1-D-ribityl)lumazine + H(+) = 5-amino-6-(D-ribitylamino)uracil + riboflavin. It participates in cofactor biosynthesis; riboflavin biosynthesis; riboflavin from 2-hydroxy-3-oxobutyl phosphate and 5-amino-6-(D-ribitylamino)uracil: step 2/2. In terms of biological role, catalyzes the dismutation of two molecules of 6,7-dimethyl-8-ribityllumazine, resulting in the formation of riboflavin and 5-amino-6-(D-ribitylamino)uracil. The chain is Riboflavin synthase (ribE) from Photobacterium leiognathi.